Consider the following 261-residue polypeptide: Sepiapterin reductase (261 aa).

Met-1 is subject to N-acetylmethionine. Gly-15–Gly-21 lines the NADP(+) pocket. Residue Ser-33 is modified to Phosphoserine. NADP(+) is bound at residue Arg-43 to Ser-44. At Ser-46 the chain carries Phosphoserine. NADP(+) is bound at residue Asp-70 to Leu-71. Residues Ser-158–Leu-159 and Tyr-171 contribute to the substrate site. Lys-175 serves as a coordination point for NADP(+). Ser-196 is modified (phosphoserine). Residue Gly-200 participates in substrate binding. An NADP(+)-binding site is contributed by Leu-202–Gln-207. The residue at position 214 (Ser-214) is a Phosphoserine. Residues Lys-222 and Asp-258 each contribute to the substrate site.

The protein belongs to the sepiapterin reductase family. Homodimer.

Its subcellular location is the cytoplasm. The enzyme catalyses L-erythro-7,8-dihydrobiopterin + NADP(+) = L-sepiapterin + NADPH + H(+). It carries out the reaction (6R)-L-erythro-5,6,7,8-tetrahydrobiopterin + 2 NADP(+) = 6-pyruvoyl-5,6,7,8-tetrahydropterin + 2 NADPH + 2 H(+). In terms of biological role, catalyzes the final one or two reductions in tetra-hydrobiopterin biosynthesis to form 5,6,7,8-tetrahydrobiopterin. The sequence is that of Sepiapterin reductase (Spr) from Mus musculus (Mouse).